A 242-amino-acid polypeptide reads, in one-letter code: MAGHSKWANIKHKKAAADAKRGKIWTRLIKEIQVAARLGGGDVNSNPRLRLAVDKAADANMPKDNVKRAIDRGVGGADGANYEEIRYEGYGISGAAIIVDTLTDNRTRTVAEVRHAFSKFGGNMGTDGSVAFMFDHVGQFLFAPGTSEDALMEAALEAGANDVNTNDDGSIEVLCDWQAFSAVKDALEAGGFKAELAEVTMKPQNEVEFTGDDAAKMQKLLDALENLDDVQDVYTNAVIVEE.

The protein belongs to the TACO1 family.

It is found in the cytoplasm. The polypeptide is Probable transcriptional regulatory protein Bcep18194_A5621 (Burkholderia lata (strain ATCC 17760 / DSM 23089 / LMG 22485 / NCIMB 9086 / R18194 / 383)).